The sequence spans 298 residues: Probable tRNA(His) guanylyltransferase (298 aa).

D58, G59, and D105 together coordinate Mg(2+). GTP-binding positions include 58-63 (DGRNFH) and 104-105 (SD).

The protein belongs to the tRNA(His) guanylyltransferase family. As to quaternary structure, homotetramer. Interacts with MFN1 and MFN2; functions as a guanyl-nucleotide exchange factor/GEF for MFN2 and also probably MFN1. Mg(2+) is required as a cofactor. Expressed in many tissues.

The protein resides in the cytoplasm. The protein localises to the mitochondrion outer membrane. It carries out the reaction a 5'-end ribonucleotide-tRNA(His) + GTP + ATP + H2O = a 5'-end phospho-guanosine-ribonucleotide-tRNA(His) + AMP + 2 diphosphate + H(+). Adds a GMP to the 5'-end of tRNA(His) after transcription and RNase P cleavage. This step is essential for proper recognition of the tRNA and for the fidelity of protein synthesis. Also functions as a guanyl-nucleotide exchange factor/GEF for the MFN1 and MFN2 mitofusins thereby regulating mitochondrial fusion. By regulating both mitochondrial dynamics and bioenergetic function, it contributes to cell survival following oxidative stress. The chain is Probable tRNA(His) guanylyltransferase (THG1L) from Homo sapiens (Human).